The chain runs to 428 residues: Adenylosuccinate synthetase (428 aa).

GTP-binding positions include 11-17 (GDEGKGK) and 39-41 (GHT). D12 acts as the Proton acceptor in catalysis. Mg(2+) is bound by residues D12 and G39. IMP-binding positions include 12-15 (DEGK), 37-40 (NAGH), T130, R144, N226, T241, and R305. The active-site Proton donor is the H40. Residue 301 to 307 (VTTGRKR) coordinates substrate. Residues R307, 333–335 (KLD), and 415–417 (GTG) contribute to the GTP site.

The protein belongs to the adenylosuccinate synthetase family. As to quaternary structure, homodimer. It depends on Mg(2+) as a cofactor.

Its subcellular location is the cytoplasm. The enzyme catalyses IMP + L-aspartate + GTP = N(6)-(1,2-dicarboxyethyl)-AMP + GDP + phosphate + 2 H(+). It functions in the pathway purine metabolism; AMP biosynthesis via de novo pathway; AMP from IMP: step 1/2. Its function is as follows. Plays an important role in the de novo pathway and in the salvage pathway of purine nucleotide biosynthesis. Catalyzes the first committed step in the biosynthesis of AMP from IMP. This Candida tropicalis (strain ATCC MYA-3404 / T1) (Yeast) protein is Adenylosuccinate synthetase.